The sequence spans 400 residues: Formate-dependent phosphoribosylglycinamide formyltransferase (400 aa).

N(1)-(5-phospho-beta-D-ribosyl)glycinamide-binding positions include 22–23 (EL) and E82. ATP is bound by residues R115, K157, 162 to 167 (SSGKGQ), 197 to 200 (EGFV), and E205. The region spanning 120 to 315 (RLAAETLGLP…EFELHARAIL (196 aa)) is the ATP-grasp domain. Residues E274 and E286 each contribute to the Mg(2+) site. N(1)-(5-phospho-beta-D-ribosyl)glycinamide contacts are provided by residues D293, K362, and 369 to 370 (RR).

Belongs to the PurK/PurT family. As to quaternary structure, homodimer.

It carries out the reaction N(1)-(5-phospho-beta-D-ribosyl)glycinamide + formate + ATP = N(2)-formyl-N(1)-(5-phospho-beta-D-ribosyl)glycinamide + ADP + phosphate + H(+). Its pathway is purine metabolism; IMP biosynthesis via de novo pathway; N(2)-formyl-N(1)-(5-phospho-D-ribosyl)glycinamide from N(1)-(5-phospho-D-ribosyl)glycinamide (formate route): step 1/1. In terms of biological role, involved in the de novo purine biosynthesis. Catalyzes the transfer of formate to 5-phospho-ribosyl-glycinamide (GAR), producing 5-phospho-ribosyl-N-formylglycinamide (FGAR). Formate is provided by PurU via hydrolysis of 10-formyl-tetrahydrofolate. The polypeptide is Formate-dependent phosphoribosylglycinamide formyltransferase (Mycolicibacterium vanbaalenii (strain DSM 7251 / JCM 13017 / BCRC 16820 / KCTC 9966 / NRRL B-24157 / PYR-1) (Mycobacterium vanbaalenii)).